The sequence spans 161 residues: MPVLEIDLLDETNKLLDEDKQLVENILQFAAGYLKIDEGTELSLTFTTNEGIREINREYRNKDQATDVISFALEEMGEGETEIDWADFDLETPKMLGDIIISTEKAEEQAKDYGHTKARELGFLAVHGLLHLLGYDHMEPDEEKIMFGLQKEVLDAYGLER.

Zn(2+) is bound by residues His-127, His-131, and His-137.

It belongs to the endoribonuclease YbeY family. It depends on Zn(2+) as a cofactor.

It is found in the cytoplasm. In terms of biological role, single strand-specific metallo-endoribonuclease involved in late-stage 70S ribosome quality control and in maturation of the 3' terminus of the 16S rRNA. The sequence is that of Endoribonuclease YbeY from Listeria welshimeri serovar 6b (strain ATCC 35897 / DSM 20650 / CCUG 15529 / CIP 8149 / NCTC 11857 / SLCC 5334 / V8).